Reading from the N-terminus, the 300-residue chain is Acetylglutamate kinase (300 aa).

Residues 73-74 (GG), R95, and N197 contribute to the substrate site.

This sequence belongs to the acetylglutamate kinase family. ArgB subfamily.

The protein localises to the cytoplasm. The catalysed reaction is N-acetyl-L-glutamate + ATP = N-acetyl-L-glutamyl 5-phosphate + ADP. It functions in the pathway amino-acid biosynthesis; L-arginine biosynthesis; N(2)-acetyl-L-ornithine from L-glutamate: step 2/4. Catalyzes the ATP-dependent phosphorylation of N-acetyl-L-glutamate. This is Acetylglutamate kinase from Bordetella bronchiseptica (strain ATCC BAA-588 / NCTC 13252 / RB50) (Alcaligenes bronchisepticus).